The primary structure comprises 475 residues: Bifunctional purple acid phosphatase 26 (475 aa).

Positions 1-30 (MNHLVIISVFLSSVLLLYRGESGITSSFIR) are cleaved as a signal peptide. An N-linked (GlcNAc...) asparagine glycan is attached at N103. Positions 162, 189, and 192 each coordinate Fe cation. D189 lines the Zn(2+) pocket. The Zn(2+) site is built by N227 and H312. N227 contacts substrate. Catalysis depends on H322, which acts as the Proton donor. H349 lines the Zn(2+) pocket. 349 to 351 (HVH) contributes to the substrate binding site. H351 is a binding site for Fe cation. 2 N-linked (GlcNAc...) asparagine glycosylation sites follow: N365 and N422.

The protein belongs to the metallophosphoesterase superfamily. Purple acid phosphatase family. As to quaternary structure, homodimer. The cofactor is Fe cation. Zn(2+) serves as cofactor. In terms of processing, glycosylated. Expressed in roots, stems, leaves, flowers and siliques.

It is found in the vacuole. The catalysed reaction is a phosphate monoester + H2O = an alcohol + phosphate. It carries out the reaction 2 a phenolic donor + H2O2 = 2 a phenolic radical donor + 2 H2O. Its activity is regulated as follows. Activated by Mg(2+), Co(2+), Mn(2+) and Ba(2+). Inhibited by Fe(2+), Cu(2+), Zn(2+), NaF, molybdate, arsenate, vanadate and inorganic phosphate. No effect of tartrate, Asp, Gln, glutathione, Asn, ascorbic acid and phosphite. In terms of biological role, metallo-phosphoesterase involved in phosphate metabolism. Acid phosphatase activity with phosphoenolpyruvate, inorganic pyrophosphate, phenyl-phosphate and p-nitrophenyl-phosphate as the most effective substrates. No activity with phytic acid, phosphocholine or bis-p-nitrophenyl-phosphate. Has a peroxidase activity at alkaline pH. The chain is Bifunctional purple acid phosphatase 26 (PAP26) from Arabidopsis thaliana (Mouse-ear cress).